The sequence spans 446 residues: Adenylosuccinate synthetase (446 aa).

GTP-binding positions include 21-27 (GDEGKGK) and 49-51 (GHT). Aspartate 22 acts as the Proton acceptor in catalysis. Mg(2+) is bound by residues aspartate 22 and glycine 49. Residues 22 to 25 (DEGK), 47 to 50 (NAGH), threonine 141, arginine 155, glutamine 236, threonine 251, and arginine 319 each bind IMP. Catalysis depends on histidine 50, which acts as the Proton donor. Position 315–321 (315–321 (VTTGRSR)) interacts with substrate. Residues arginine 321, 347-349 (KLD), and 429-431 (STS) contribute to the GTP site.

The protein belongs to the adenylosuccinate synthetase family. Homodimer. Mg(2+) is required as a cofactor.

Its subcellular location is the cytoplasm. The enzyme catalyses IMP + L-aspartate + GTP = N(6)-(1,2-dicarboxyethyl)-AMP + GDP + phosphate + 2 H(+). Its pathway is purine metabolism; AMP biosynthesis via de novo pathway; AMP from IMP: step 1/2. Plays an important role in the de novo pathway of purine nucleotide biosynthesis. Catalyzes the first committed step in the biosynthesis of AMP from IMP. This is Adenylosuccinate synthetase from Polaromonas naphthalenivorans (strain CJ2).